Consider the following 152-residue polypeptide: Nucleoside diphosphate kinase A (152 aa).

ATP is bound by residues Lys12, Phe60, Arg88, and Thr94. Lys100 participates in a covalent cross-link: Glycyl lysine isopeptide (Lys-Gly) (interchain with G-Cter in ubiquitin). Positions 105 and 115 each coordinate ATP. The active-site Pros-phosphohistidine intermediate is His118. Phosphoserine is present on residues Ser120 and Ser122. Lys124 carries the post-translational modification N6-acetyllysine. Ser125 carries the phosphoserine modification.

The protein belongs to the NDK family. As to quaternary structure, hexamer of two different chains: An and B (A6, A5B, A4B2, A3B3, A2B4, AB5, B6). Interacts with PRUNE1. Component of the SET complex, composed of at least ANP32A, APEX1, HMGB2, NME1, SET and TREX1. Within this complex, interacts directly with SET. Also interacts with TREX1, but only following translocation to the nucleus. It depends on Mg(2+) as a cofactor.

The protein resides in the cytoplasm. The protein localises to the nucleus. The catalysed reaction is a 2'-deoxyribonucleoside 5'-diphosphate + ATP = a 2'-deoxyribonucleoside 5'-triphosphate + ADP. The enzyme catalyses a ribonucleoside 5'-diphosphate + ATP = a ribonucleoside 5'-triphosphate + ADP. Autophosphorylation at His-118 increases serine/threonine protein kinase activity of the enzyme. Interaction with the SET complex inhibits exonuclease activity. In terms of biological role, major role in the synthesis of nucleoside triphosphates other than ATP. The ATP gamma phosphate is transferred to the NDP beta phosphate via a ping-pong mechanism, using a phosphorylated active-site intermediate. Possesses nucleoside-diphosphate kinase, serine/threonine-specific protein kinase, geranyl and farnesyl pyrophosphate kinase, histidine protein kinase and 3'-5' exonuclease activities. Involved in cell proliferation, differentiation and development, signal transduction, G protein-coupled receptor endocytosis, and gene expression. Required for neural development including neural patterning and cell fate determination. During GZMA-mediated cell death, works in concert with TREX1. NME1 nicks one strand of DNA and TREX1 removes bases from the free 3' end to enhance DNA damage and prevent DNA end reannealing and rapid repair. The protein is Nucleoside diphosphate kinase A (Nme1) of Mus musculus (Mouse).